Here is a 476-residue protein sequence, read N- to C-terminus: Methylenetetrahydrofolate--tRNA-(uracil-5-)-methyltransferase TrmFO (476 aa).

14 to 19 contacts FAD; that stretch reads GGGLAG. Residues 428-447 are disordered; sequence LTEPPTHGADGKKLRGPEKS. The span at 436-447 shows a compositional bias: basic and acidic residues; it reads ADGKKLRGPEKS.

Belongs to the MnmG family. TrmFO subfamily. The cofactor is FAD.

Its subcellular location is the cytoplasm. It carries out the reaction uridine(54) in tRNA + (6R)-5,10-methylene-5,6,7,8-tetrahydrofolate + NADH + H(+) = 5-methyluridine(54) in tRNA + (6S)-5,6,7,8-tetrahydrofolate + NAD(+). It catalyses the reaction uridine(54) in tRNA + (6R)-5,10-methylene-5,6,7,8-tetrahydrofolate + NADPH + H(+) = 5-methyluridine(54) in tRNA + (6S)-5,6,7,8-tetrahydrofolate + NADP(+). Functionally, catalyzes the folate-dependent formation of 5-methyl-uridine at position 54 (M-5-U54) in all tRNAs. The chain is Methylenetetrahydrofolate--tRNA-(uracil-5-)-methyltransferase TrmFO from Rhodopseudomonas palustris (strain BisA53).